The chain runs to 574 residues: Lipase maturation factor 1 (574 aa).

Positions 1-39 (MRPDSLVMAAPEGSLRKRKVGGAEHSPASQPSLARDPAD) are disordered. The Cytoplasmic segment spans residues 1 to 49 (MRPDSLVMAAPEGSLRKRKVGGAEHSPASQPSLARDPADSPARLHTGTF). Residues 50-72 (WLTRIVLLRALAFIYFVAFLVAF) traverse the membrane as a helical segment. Residues 73-127 (NQNKALIGDRGLLPCKLYLKNVQEYFQGSTGWAAWTYAPTIMWLLDWSDMNFNLD) lie on the Lumenal side of the membrane. Residues 128 to 151 (LIALLGLGISSFVLVTGCANMILM) form a helical membrane-spanning segment. Residues 152 to 207 (TALWALYMSLVNVGQIWYSFGWESQLLETGFLGIFLSPLWTLSRLPKNTPTSQIVL) are Cytoplasmic-facing. The chain crosses the membrane as a helical span at residues 208–221 (WGFRWLIFRIMLGA). Residues 222–292 (GLIKVRGDKC…LGRRMRILHG (71 aa)) lie on the Lumenal side of the membrane. The helical transmembrane segment at 293–321 (VLQILFQVILIISGNLSFLNWLTIVPSLA) threads the bilayer. The Cytoplasmic portion of the chain corresponds to 322–367 (CFDDAALGFLFPSGPQGLKKQVLEIQREDTQRVQPKPRDRGCLVRQ). A helical transmembrane segment spans residues 368-388 (VVNISLGILVAWLSVPVVINL). Residues 389 to 574 (LSSRQIMNTS…LPEPPSRHTR (186 aa)) are Lumenal-facing.

This sequence belongs to the lipase maturation factor family. As to quaternary structure, interacts with LPL and SEL1L. Expressed in all tissues synthesizing lipoprotein lipase (Lpl) and hepatic lipase (Lipc), including adipose tissue, skeletal muscle, heart, and liver. Expressed at higher levels in tissues that express little or no lipase activity such as testis and pancreas suggesting additional functions in these tissues.

It localises to the endoplasmic reticulum membrane. Its function is as follows. Involved in the maturation of specific proteins in the endoplasmic reticulum. Required for maturation and transport of active lipoprotein lipase (LPL) through the secretory pathway. Each LMF1 molecule chaperones 50 or more molecules of LPL. The chain is Lipase maturation factor 1 (Lmf1) from Mus musculus (Mouse).